The primary structure comprises 554 residues: Glucose-6-phosphate isomerase (554 aa).

Glutamate 359 (proton donor) is an active-site residue. Active-site residues include histidine 390 and lysine 518.

The protein belongs to the GPI family.

The protein resides in the cytoplasm. The enzyme catalyses alpha-D-glucose 6-phosphate = beta-D-fructose 6-phosphate. It functions in the pathway carbohydrate biosynthesis; gluconeogenesis. Its pathway is carbohydrate degradation; glycolysis; D-glyceraldehyde 3-phosphate and glycerone phosphate from D-glucose: step 2/4. Its function is as follows. Catalyzes the reversible isomerization of glucose-6-phosphate to fructose-6-phosphate. In Pseudomonas syringae pv. tomato (strain ATCC BAA-871 / DC3000), this protein is Glucose-6-phosphate isomerase.